We begin with the raw amino-acid sequence, 532 residues long: Light-independent protochlorophyllide reductase subunit B (532 aa).

D36 provides a ligand contact to [4Fe-4S] cluster. The active-site Proton donor is the D318. 453–454 (GM) contacts substrate.

It belongs to the ChlB/BchB/BchZ family. As to quaternary structure, protochlorophyllide reductase is composed of three subunits; ChlL, ChlN and ChlB. Forms a heterotetramer of two ChlB and two ChlN subunits. It depends on [4Fe-4S] cluster as a cofactor.

The protein resides in the plastid. The protein localises to the chloroplast. The enzyme catalyses chlorophyllide a + oxidized 2[4Fe-4S]-[ferredoxin] + 2 ADP + 2 phosphate = protochlorophyllide a + reduced 2[4Fe-4S]-[ferredoxin] + 2 ATP + 2 H2O. The protein operates within porphyrin-containing compound metabolism; chlorophyll biosynthesis (light-independent). Functionally, component of the dark-operative protochlorophyllide reductase (DPOR) that uses Mg-ATP and reduced ferredoxin to reduce ring D of protochlorophyllide (Pchlide) to form chlorophyllide a (Chlide). This reaction is light-independent. The NB-protein (ChlN-ChlB) is the catalytic component of the complex. The chain is Light-independent protochlorophyllide reductase subunit B from Tetradesmus obliquus (Green alga).